The primary structure comprises 467 residues: Transcription factor CRF1 (467 aa).

The segment covering 1–10 has biased composition (polar residues); the sequence is MLLSAPVNST. Disordered stretches follow at residues 1 to 42, 62 to 110, 151 to 170, and 341 to 361; these read MLLS…VVLS, DFES…SSKT, SKSE…TNED, and TYRD…DRKR. Over residues 11–23 the composition is skewed to basic residues; it reads VRRKPHSPNKKKP. The span at 28–42 shows a compositional bias: low complexity; the sequence is TAASFSSSSSTVVLS. A compositionally biased stretch (basic and acidic residues) spans 89-102; it reads YSREENTNEVEEKT.

In terms of assembly, interacts with FHL1 to form a repressor complex. The formation of the CRF1-FHL1 complex is inhibited by the TOR pathway. Phosphorylated by CDC28 and YAK1.

It is found in the cytoplasm. It localises to the nucleus. Its function is as follows. Transcription factor, corepressor with FHL1 of ribosomal protein genes. May be involved in the blocking of the spread of silencing. The sequence is that of Transcription factor CRF1 (CRF1) from Saccharomyces cerevisiae (strain ATCC 204508 / S288c) (Baker's yeast).